Consider the following 489-residue polypeptide: Rhamnulokinase (489 aa).

13–17 (ASSGR) provides a ligand contact to ATP. A disulfide bridge connects residues Cys-68 and Cys-222. Residues Gly-83 and 236 to 238 (HDT) each bind substrate. Asp-237 acts as the Proton acceptor in catalysis. Position 259 (Thr-259) interacts with ATP. Substrate is bound at residue Asn-296. Gln-304 is an ATP binding site. The cysteines at positions 353 and 370 are disulfide-linked. ATP is bound at residue Gly-402. Cys-413 and Cys-417 are joined by a disulfide.

This sequence belongs to the rhamnulokinase family. Mg(2+) serves as cofactor.

It carries out the reaction L-rhamnulose + ATP = L-rhamnulose 1-phosphate + ADP + H(+). Its pathway is carbohydrate degradation; L-rhamnose degradation; glycerone phosphate from L-rhamnose: step 2/3. Its function is as follows. Involved in the catabolism of L-rhamnose (6-deoxy-L-mannose). Catalyzes the transfer of the gamma-phosphate group from ATP to the 1-hydroxyl group of L-rhamnulose to yield L-rhamnulose 1-phosphate. The sequence is that of Rhamnulokinase from Shigella sonnei (strain Ss046).